Consider the following 191-residue polypeptide: A-type ATP synthase subunit E 1 (191 aa).

It belongs to the V-ATPase E subunit family. As to quaternary structure, has multiple subunits with at least A(3), B(3), C, D, E, F, H, I and proteolipid K(x).

It localises to the cell membrane. Its function is as follows. Component of the A-type ATP synthase that produces ATP from ADP in the presence of a proton gradient across the membrane. The protein is A-type ATP synthase subunit E 1 of Methanospirillum hungatei JF-1 (strain ATCC 27890 / DSM 864 / NBRC 100397 / JF-1).